A 288-amino-acid chain; its full sequence is Ankyrin repeat and SOCS box protein 8 (288 aa).

A Phosphoserine modification is found at serine 17. ANK repeat units lie at residues 52–81 (GTLKPLHCACMVSDADCVELLLEKGAEVNA), 85–113 (YNRTALHYAAEKDEACVEVLLEYGANPNA), 117–146 (NRDTPLHWAAFKNNAECVRALLESGASVNA), and 150–179 (NNDTPLSWAAMKGNLESVSILLDYGAEVRV). Residues 235-288 (QLCEKLTVLCSAPGTLKTLARYAVRRSLGLQYLPDAVKGLPLPASLKEYLLLLE) enclose the SOCS box domain.

This sequence belongs to the ankyrin SOCS box (ASB) family. Interacts with TBK1; this interaction promotes TBK1 proteasomal degradation. Post-translationally, phosphorylated by TBK1. As to expression, highest level of expression in skeletal muscle. Also expressed in heart, brain, placenta, liver, kidney and pancreas.

The protein localises to the cytoplasm. The protein operates within protein modification; protein ubiquitination. In terms of biological role, may be a substrate-recognition component of a SCF-like ECS (Elongin-Cullin-SOCS-box protein) E3 ubiquitin-protein ligase complex which mediates the ubiquitination and subsequent proteasomal degradation of target proteins. Inhibits IFN-beta production through the IRF3 signaling pathway by targeting TBK1 via 'Lys-48'-linked ubiquitination, leading to its proteasomal degradation. This is Ankyrin repeat and SOCS box protein 8 (ASB8) from Homo sapiens (Human).